Consider the following 135-residue polypeptide: Small ribosomal subunit protein uS12 (135 aa).

The segment at 1 to 23 is disordered; it reads MPTINQLVRKGRHSKTTKSDSPA. Asp-102 is modified (3-methylthioaspartic acid).

This sequence belongs to the universal ribosomal protein uS12 family. In terms of assembly, part of the 30S ribosomal subunit. Contacts proteins S8 and S17. May interact with IF1 in the 30S initiation complex.

Its function is as follows. With S4 and S5 plays an important role in translational accuracy. In terms of biological role, interacts with and stabilizes bases of the 16S rRNA that are involved in tRNA selection in the A site and with the mRNA backbone. Located at the interface of the 30S and 50S subunits, it traverses the body of the 30S subunit contacting proteins on the other side and probably holding the rRNA structure together. The combined cluster of proteins S8, S12 and S17 appears to hold together the shoulder and platform of the 30S subunit. In Lactobacillus gasseri (strain ATCC 33323 / DSM 20243 / BCRC 14619 / CIP 102991 / JCM 1131 / KCTC 3163 / NCIMB 11718 / NCTC 13722 / AM63), this protein is Small ribosomal subunit protein uS12.